The following is a 613-amino-acid chain: Putative adenosylhomocysteinase 3 (613 aa).

Low complexity-rich tracts occupy residues 1–14 (MSVQVVSAAAAAKV) and 35–44 (AAAVGAMVPP). Positions 1–186 (MSVQVVSAAA…KQQKNSKGSS (186 aa)) are disordered. Position 2 is an N-acetylserine (S2). The tract at residues 2–111 (SVQVVSAAAA…DGGEALVSPD (110 aa)) is LISN domain, inhibits interaction with ITPR1. The segment covering 52-68 (APAPAPAAERPPAPGPG) has biased composition (pro residues). Over residues 70-80 (GPTAALSPAAG) the composition is skewed to low complexity. Phosphoserine is present on S109. The segment covering 137-146 (RPTKIGRRSL) has biased composition (basic residues). Low complexity predominate over residues 147–166 (SRSISQSSTDSYSSAASYTD). Phosphoserine occurs at positions 151, 154, 157, and 160. Residues T238, D312, and E337 each contribute to the substrate site. Position 338 to 340 (338 to 340 (SVT)) interacts with NAD(+). Positions 367 and 371 each coordinate substrate. Residues N372, 403-408 (GEVGKG), E424, N459, 480-482 (MGH), and N527 each bind NAD(+).

It belongs to the adenosylhomocysteinase family. As to quaternary structure, homotetramer. Forms heteromultimers with AHCYL1 (via the C-terminal region). Interacts with ITPR1; with lower affinity than AHCYL1 and maybe via ITPR1. Interacts with SLC4A4. Interacts with ZCCHC4. It depends on NAD(+) as a cofactor. Post-translationally, phosphorylated during neuronal differentiation at the LISN domain. As to expression, highly expressed in cerebrum, cerebellum and kidney. Also expressed in thymus, spleen, testis, ovary and, at lower, levels in lung and liver (at protein level). In cerebellum, expressed in interneurons.

The protein localises to the cytoplasm. It is found in the microsome. It carries out the reaction S-adenosyl-L-homocysteine + H2O = L-homocysteine + adenosine. Its pathway is amino-acid biosynthesis; L-homocysteine biosynthesis; L-homocysteine from S-adenosyl-L-homocysteine: step 1/1. In terms of biological role, may regulate the electrogenic sodium/bicarbonate cotransporter SLC4A4 activity and Mg(2+)-sensitivity. On the contrary of its homolog AHCYL1, does not regulate ITPR1 sensitivity to inositol 1,4,5-trisphosphate. This Mus musculus (Mouse) protein is Putative adenosylhomocysteinase 3 (Ahcyl2).